Here is a 3131-residue protein sequence, read N- to C-terminus: Intermembrane lipid transfer protein vps1302 (3131 aa).

One can recognise a Chorein N-terminal domain in the interval 2 to 115 (LEGLLANFLN…VLESKRRQMQ (114 aa)). A compositionally biased stretch (basic and acidic residues) spans 774-801 (DGKASDDDDNGDWRPESSESLDSHESEY). The interval 774 to 807 (DGKASDDDDNGDWRPESSESLDSHESEYKLNNTP) is disordered. In terms of domain architecture, SHR-BD spans 2085–2363 (KVMIYPPYVI…NYSWDFPILK (279 aa)).

It belongs to the VPS13 family.

The protein resides in the golgi apparatus. Its subcellular location is the trans-Golgi network. Mediates the transfer of lipids between membranes at organelle contact sites. May play a role in mitochondrial lipid homeostasis, Golgi vesicle transport, reticulophagy, actin cytoskeleton organization and formation of the forespore membrane. This Schizosaccharomyces pombe (strain 972 / ATCC 24843) (Fission yeast) protein is Intermembrane lipid transfer protein vps1302.